The sequence spans 599 residues: Putative fused cobalt transport protein CbiMQ (599 aa).

Residues 1-239 (MHIMEGFLPS…LLPSSDQNLS (239 aa)) are cbiM. Transmembrane regions (helical) follow at residues 12–32 (WWQFWALLAVVCVLAGMAALI), 44–64 (LLGLAGACVFILSSLKLPSVG), 74–94 (FGAILFGPAVCSVFCTIVLVF), 106–126 (TLGANIISMGVAGPLAACIIF), 140–160 (SFSVTVFCAAAAADLVTYMMT), 162–182 (LQLALAYPAAEGGVLASFVVY), 183–203 (LGIFSITQVPLAVLEGILIVL), 247–267 (IIAGIIVVLLTASLAFLLAGL), 303–323 (WLFALQAGIGAAVLVFCLYLL), 356–376 (QVSAWLKLLFCLSAIIIGVTS), 377–397 (PLPYLPLFIAGVMIFAALIIA), 407–427 (LLTIPLVFAGTGAAVILLITG), 438–458 (IGAFHFQITTTSLELAALVLS), 463–483 (GMCSLYFLTLTTPITSLFSVL), 493–513 (IDLSMLIYRYIFVFIGEAIAI), and 579–599 (MAVFLFIALIFGLLCAEMLLL). Residues 341–599 (DEHILDDVAI…GLLCAEMLLL (259 aa)) are cbiQ.

The protein in the N-terminal section; belongs to the CbiM family. It in the C-terminal section; belongs to the CbiQ family. In terms of assembly, forms an energy-coupling factor (ECF) transporter complex composed of an ATP-binding protein (A component, CbiO), a transmembrane protein (T component, CbiQ) and 2 possible substrate-capture proteins (S components, CbiM and CbiN) of unknown stoichimetry.

It is found in the cell membrane. Its pathway is cofactor biosynthesis; adenosylcobalamin biosynthesis. In terms of biological role, part of the energy-coupling factor (ECF) transporter complex CbiMNOQ involved in cobalt import. This chain is Putative fused cobalt transport protein CbiMQ (cbiMQ), found in Methanocorpusculum labreanum (strain ATCC 43576 / DSM 4855 / Z).